Consider the following 256-residue polypeptide: Indole-3-glycerol phosphate synthase (256 aa).

This sequence belongs to the TrpC family.

It catalyses the reaction 1-(2-carboxyphenylamino)-1-deoxy-D-ribulose 5-phosphate + H(+) = (1S,2R)-1-C-(indol-3-yl)glycerol 3-phosphate + CO2 + H2O. It participates in amino-acid biosynthesis; L-tryptophan biosynthesis; L-tryptophan from chorismate: step 4/5. This Pelodictyon phaeoclathratiforme (strain DSM 5477 / BU-1) protein is Indole-3-glycerol phosphate synthase.